Here is a 226-residue protein sequence, read N- to C-terminus: 6-deoxy-6-sulfo-D-fructose transaldolase (226 aa).

The active-site Schiff-base intermediate with substrate is the Lys-89.

Belongs to the transaldolase family.

The enzyme catalyses 6-deoxy-6-sulfo-D-fructose + D-glyceraldehyde 3-phosphate = D-fructose 6-phosphate + (2S)-3-sulfolactaldehyde. The catalysed reaction is 6-deoxy-6-sulfo-D-fructose + D-erythrose 4-phosphate = (2S)-3-sulfolactaldehyde + D-sedoheptulose 7-phosphate. Functionally, part of the sulfo-TAL (or sulfo-SFT) pathway, a D-sulfoquinovose degradation pathway that produces sulfolactate (SL). Catalyzes the conversion of 6-deoxy-6-sulfo-D-fructose (SF) and glyceraldehyde 3-phosphate (GAP) into fructose-6-phosphate (F6P) and 3-sulfolactaldehyde (SLA). Can also catalyze the SF-cleavage with erythrose 4-phosphate (E4P) as acceptor, forming 3-sulfolactaldehyde (SLA) and sedoheptulose 7-phosphate (S7P). In Priestia aryabhattai (Bacillus aryabhattai), this protein is 6-deoxy-6-sulfo-D-fructose transaldolase.